The primary structure comprises 777 residues: Lon protease (777 aa).

The Lon N-terminal domain maps to 11 to 204; sequence IPVLPLRDVV…FLMAIMESEI (194 aa). An ATP-binding site is contributed by 356–363; it reads GPPGVGKT. In terms of domain architecture, Lon proteolytic spans 592–773; that stretch reads TNQIGQVIGL…EEVLKLSLEK (182 aa). Residues Ser-679 and Lys-722 contribute to the active site.

It belongs to the peptidase S16 family. As to quaternary structure, homohexamer. Organized in a ring with a central cavity.

Its subcellular location is the cytoplasm. The catalysed reaction is Hydrolysis of proteins in presence of ATP.. In terms of biological role, ATP-dependent serine protease that mediates the selective degradation of mutant and abnormal proteins as well as certain short-lived regulatory proteins. Required for cellular homeostasis and for survival from DNA damage and developmental changes induced by stress. Degrades polypeptides processively to yield small peptide fragments that are 5 to 10 amino acids long. Binds to DNA in a double-stranded, site-specific manner. The protein is Lon protease of Buchnera aphidicola subsp. Acyrthosiphon pisum (strain APS) (Acyrthosiphon pisum symbiotic bacterium).